We begin with the raw amino-acid sequence, 126 residues long: UPF0102 protein BCAN_A0183 (126 aa).

The protein belongs to the UPF0102 family.

This is UPF0102 protein BCAN_A0183 from Brucella canis (strain ATCC 23365 / NCTC 10854 / RM-666).